The chain runs to 538 residues: Putative cysteine ligase BshC (538 aa).

Residues 454-482 (LEKNAGFIQDQLQFLEKTVIRRIEEKENY) adopt a coiled-coil conformation.

The protein belongs to the BshC family.

In terms of biological role, involved in bacillithiol (BSH) biosynthesis. May catalyze the last step of the pathway, the addition of cysteine to glucosamine malate (GlcN-Mal) to generate BSH. The sequence is that of Putative cysteine ligase BshC from Bacillus licheniformis (strain ATCC 14580 / DSM 13 / JCM 2505 / CCUG 7422 / NBRC 12200 / NCIMB 9375 / NCTC 10341 / NRRL NRS-1264 / Gibson 46).